Reading from the N-terminus, the 214-residue chain is MRHVDGVVGNRYDDPDLDEQLHAHEDAGRLERVVLEAGQRKRSRLRVETDAGTDLGIVVDQPELRAGDVLFLDDDAAAVVEFESRTAFVVDLPSPGPETVAAAVELGHRVGNQHWDIAIEGGTVYVPVEADRRIIEDVLGEHIPDSGTTRYASVDASLFIGENAEPSGVDHSHEATDSGHGYGEDHDHDHSHDHNHDHDHNHDHDHSHSHDSHE.

Positions Asn163–Glu214 are disordered. Over residues Gly168–Glu214 the composition is skewed to basic and acidic residues.

It belongs to the UreE family.

It localises to the cytoplasm. In terms of biological role, involved in urease metallocenter assembly. Binds nickel. Probably functions as a nickel donor during metallocenter assembly. The sequence is that of Urease accessory protein UreE from Natronomonas pharaonis (strain ATCC 35678 / DSM 2160 / CIP 103997 / JCM 8858 / NBRC 14720 / NCIMB 2260 / Gabara) (Halobacterium pharaonis).